Consider the following 825-residue polypeptide: MSEGTYQRLWEASHVTLEEVLEKEPSVLEPVPSRERQSFQYRISVLYLYYLGLLRRFNLAYDQMVQPQKRRLLRRLLDGVAGRVLELKDELVRVDLCETHCLDRVLQDLKLTPADLEVPIPKYFQLEQSSAVKARQQMLADILNRLEPLVSQENLRGLSRTAALILVQSAERARQGRLRATFMREIRKEEERDRRIWENGQQKFSRDQGAIVIQKVWKGYLQRKRIEQDRRVEMEFIGMLPSPNQTARLNTLNQAFLGEESRRMRQVEKEEEFQEAIGKTYESLTETEGPDMKERMKDQIRQWFIECHALTGRFPDYPDEASGGSYLIFADKTPEQVRLDLEAQAQESRKKDQEKKEKNKEKEKEKKEKKKKKVKEEKVKKEPEVMFRVLPSKSIPVINAGHEEYTSVWKSRYDNKHPSQNFDSETLREEKRKQVEMEIRVQVDELMRQELKNLRLAVDREETRPLKSPKKKGGKKSGKKKKEKDLTPDRSVDSLFEELVIIGLIKKSALVTLSDYIGDCLYLGSTLTLANKMPMPSLFDIRQNMALYGVLRLGSHDIHTMAPLVRSILLVGPSGMGKKMLVQAVCTETGANLFDLSPDNLMGKYPGKNGAQLLVHIVFKVARLLQPSVIWIGNTEKTFYKKVPKEERTMDPKRIKKDLMRATKQLSPGDRVMLIGTTERPQLAEMKGLCRFYERILFIPRPDYASRYVLWKRMIESQGRGVQLTSSLDVSALARVSDGYTPSHILQSIQSVLTERRLLQLIKKPLVASEFVGHLARLDPVYREEEESLKEWFFKTPLGKKNMKFTKDQLEAEEARLTKEKKKKK.

The IQ domain occupies 206 to 235 (RDQGAIVIQKVWKGYLQRKRIEQDRRVEME). A compositionally biased stretch (basic and acidic residues) spans 344–366 (QAQESRKKDQEKKEKNKEKEKEK). 2 disordered regions span residues 344–378 (QAQE…KEEK) and 459–487 (DREE…KDLT). Residues 467 to 482 (KSPKKKGGKKSGKKKK) show a composition bias toward basic residues. 572-579 (GPSGMGKK) provides a ligand contact to ATP.

The protein belongs to the AAA ATPase family.

The protein is IQ and AAA domain-containing protein 1-like (Iqca1l) of Mus musculus (Mouse).